The primary structure comprises 404 residues: Cysteine desulfurase IscS (404 aa).

Pyridoxal 5'-phosphate is bound by residues 73–74, Asn153, Gln181, and 201–203; these read AT and SAH. Residue Lys204 is modified to N6-(pyridoxal phosphate)lysine. Thr241 lines the pyridoxal 5'-phosphate pocket. The Cysteine persulfide intermediate role is filled by Cys327. Cys327 lines the [2Fe-2S] cluster pocket.

The protein belongs to the class-V pyridoxal-phosphate-dependent aminotransferase family. NifS/IscS subfamily. In terms of assembly, homodimer. Forms a heterotetramer with IscU, interacts with other sulfur acceptors. The cofactor is pyridoxal 5'-phosphate.

Its subcellular location is the cytoplasm. It carries out the reaction (sulfur carrier)-H + L-cysteine = (sulfur carrier)-SH + L-alanine. It participates in cofactor biosynthesis; iron-sulfur cluster biosynthesis. In terms of biological role, master enzyme that delivers sulfur to a number of partners involved in Fe-S cluster assembly, tRNA modification or cofactor biosynthesis. Catalyzes the removal of elemental sulfur atoms from cysteine to produce alanine. Functions as a sulfur delivery protein for Fe-S cluster synthesis onto IscU, an Fe-S scaffold assembly protein, as well as other S acceptor proteins. The sequence is that of Cysteine desulfurase IscS from Anaeromyxobacter sp. (strain Fw109-5).